Reading from the N-terminus, the 1194-residue chain is MAIRTGFCNPFLTQASGIKYNPRTGRGSNREFLHSYKTTMSSFQFLAPKCLDEDVPMEERKGVHVGTLSRPPKVYCNGKEVPILDFRCSSPWPRRVNIWGEIDFRGDKFDPRFNTFHVYDIVETTEAASNGDVSRFATATRPLGTVITLLGMSRCGKRVAVHVYGICQYFYINKAEVDTACGIRSCSELSVLLAECLRSSMITQNDATLNGDKNAFHGTSFKSASPESFRVEVIERTDVYYYDTQPCAFYRVYSPSSKFTNYLCDNFHPELKKYEGRVDATTRFLMDNPGFVSFGWYQLKPGVDGERVRVRPASRQLTLSDVEIDCMSDNLQAIPNDDSWPDYKLLCFDIECKSGGSNELAFPDATHLEDLVIQISCLLYSIPRQSLEHILLFSLGSCDLPQRYVQEMKDAGLPEPTVLEFDSEFELLIAFMTLVKQYAPEFATGYNIVNFDWAFIMEKLNSIYSLKLDGYGSINRGGLFKIWDVGKSGFQRRSKVKINGLISLDMYAIATEKLKLSSYKLDSVAREALNESKRDLPYKDIPGYYASGPNTRGIIGEYCIQDSALVGKLFFKYLPHLELSAVARLARITLTKAIYDGQQVRIYTCLLGLASSRGFILPDGGYPATFEYKDVIPDVGDVEEEMDEDESVSPTGTSSGRNVGYKGARVFDPDTGFYIDPVVVLDFASLYPSIIQAHNLCFTTLTLNFETVKRLNPSDYATFTVGGKRLFFVRSNVRESLLGVLLKDWLAMRKAIRARIPGSSSDEAVLLDKQQAAIKVVCNSVYGFTGVAQGFLPCLYVAATVTTIGRQMLLSTRDYIHNNWAAFERFITAFPDIESSVLSQKAYEVKVIYGDTDSVFIRFKGVGVEGIAKIGEKMAHIISTALFCPPIKLECEKTFIKLLLITKKKYIGVIYGGKVLMKGVDLVRKNNCQFINDYARKLVELLLYDDTVSRAAAEASCVSIAEWNRRAMPSGMAGFGRIIADAHRQITSPKLDINKFVMTAELSRPPSAYINRRLAHLTVYYKLVMRQGQIPNVRERIPYVIVAPTDEVEADAKSVALLRGDPLQNTAGKRCGEAKRKLIISDLAEDPIHVTSHGLSLNIDYYFSHLIGTASVTFKALFGNDTKLTERLLKRFIPETRVVNVKMLNRLQAAGFVCIHAPRWDNKMNTEAEITEEEQSHQIMRRVFCIPKAILHQS.

Belongs to the DNA polymerase type-B family. As to quaternary structure, forms a complex with the ssDNA-binding protein, the DNA polymerase processivity factor, and the alkaline exonuclease. Interacts with the helicase-primase complex composed of the primase, the helicase and the primase-associated factor; this interaction may coordinate leading and lagging strand DNA synthesis at the replication fork.

The protein resides in the host nucleus. The enzyme catalyses DNA(n) + a 2'-deoxyribonucleoside 5'-triphosphate = DNA(n+1) + diphosphate. It carries out the reaction Endonucleolytic cleavage to 5'-phosphomonoester.. Its function is as follows. Replicates viral genomic DNA. The replication complex is composed of six viral proteins: the DNA polymerase, processivity factor, primase, primase-associated factor, helicase, and ssDNA-binding protein. Additionally, the polymerase contains an intrinsic ribonuclease H (RNase H) activity that specifically degrades RNA/DNA heteroduplexes or duplex DNA substrates in the 5' to 3' direction. Therefore, it can catalyze the excision of the RNA primers that initiate the synthesis of Okazaki fragments at a replication fork during viral DNA replication. The polypeptide is DNA polymerase catalytic subunit (Varicella-zoster virus (strain Oka vaccine) (HHV-3)).